We begin with the raw amino-acid sequence, 196 residues long: Glycerol-3-phosphate acyltransferase (196 aa).

Helical transmembrane passes span 2–22, 51–71, 80–100, 112–132, and 137–156; these read GWWL…SYLI, VVGG…VFIA, LVSL…FMKF, IIFC…LVIV, and YASL…GYLF.

It belongs to the PlsY family. Probably interacts with PlsX.

It is found in the cell inner membrane. It carries out the reaction an acyl phosphate + sn-glycerol 3-phosphate = a 1-acyl-sn-glycero-3-phosphate + phosphate. It participates in lipid metabolism; phospholipid metabolism. Its function is as follows. Catalyzes the transfer of an acyl group from acyl-phosphate (acyl-PO(4)) to glycerol-3-phosphate (G3P) to form lysophosphatidic acid (LPA). This enzyme utilizes acyl-phosphate as fatty acyl donor, but not acyl-CoA or acyl-ACP. The protein is Glycerol-3-phosphate acyltransferase of Thermotoga petrophila (strain ATCC BAA-488 / DSM 13995 / JCM 10881 / RKU-1).